Reading from the N-terminus, the 192-residue chain is Large ribosomal subunit protein uL5 (192 aa).

The protein belongs to the universal ribosomal protein uL5 family. As to quaternary structure, part of the 50S ribosomal subunit; part of the 5S rRNA/L5/L18/L25 subcomplex. Contacts the 5S rRNA and the P site tRNA. Forms a bridge to the 30S subunit in the 70S ribosome.

Its function is as follows. This is one of the proteins that bind and probably mediate the attachment of the 5S RNA into the large ribosomal subunit, where it forms part of the central protuberance. In the 70S ribosome it contacts protein S13 of the 30S subunit (bridge B1b), connecting the 2 subunits; this bridge is implicated in subunit movement. Contacts the P site tRNA; the 5S rRNA and some of its associated proteins might help stabilize positioning of ribosome-bound tRNAs. This chain is Large ribosomal subunit protein uL5, found in Paenarthrobacter aurescens (strain TC1).